Reading from the N-terminus, the 297-residue chain is MTNVNRRPDWIKVKAPNSAEYYNTKDLIKNLRLNTVCEEAACPNIGECWSRKHATVMILGSVCTRACRFCNVKTGRPDLLDPHEPRRLAEAVQKLNLNHVVITSVDRDDLEDGGASHFAECINEIRRSSPNTTIEILTPDFLRKAGAVEVIANSKPDVFNHNVETVPSLYKTIRPGARYYNSLSLLHNIKKLSPEIFTKSGMMVGLGEEINEVVQVMDDLREANVDFLTIGQYLQPTKSHAEVIKYVTPEEFKYLERIAKTKGFLMVSATPLTRSSYHADKDFQKLKENYNIRLASM.

[4Fe-4S] cluster-binding residues include cysteine 37, cysteine 42, cysteine 48, cysteine 63, cysteine 67, cysteine 70, and serine 276. The Radical SAM core domain maps to 49–265 (WSRKHATVMI…ERIAKTKGFL (217 aa)).

It belongs to the radical SAM superfamily. Lipoyl synthase family. [4Fe-4S] cluster serves as cofactor.

The protein resides in the cytoplasm. The catalysed reaction is [[Fe-S] cluster scaffold protein carrying a second [4Fe-4S](2+) cluster] + N(6)-octanoyl-L-lysyl-[protein] + 2 oxidized [2Fe-2S]-[ferredoxin] + 2 S-adenosyl-L-methionine + 4 H(+) = [[Fe-S] cluster scaffold protein] + N(6)-[(R)-dihydrolipoyl]-L-lysyl-[protein] + 4 Fe(3+) + 2 hydrogen sulfide + 2 5'-deoxyadenosine + 2 L-methionine + 2 reduced [2Fe-2S]-[ferredoxin]. It functions in the pathway protein modification; protein lipoylation via endogenous pathway; protein N(6)-(lipoyl)lysine from octanoyl-[acyl-carrier-protein]: step 2/2. Its function is as follows. Catalyzes the radical-mediated insertion of two sulfur atoms into the C-6 and C-8 positions of the octanoyl moiety bound to the lipoyl domains of lipoate-dependent enzymes, thereby converting the octanoylated domains into lipoylated derivatives. The chain is Lipoyl synthase from Rickettsia typhi (strain ATCC VR-144 / Wilmington).